Reading from the N-terminus, the 547-residue chain is Glucose-6-phosphate isomerase (547 aa).

The active-site Proton donor is the Glu-350. Residues His-381 and Lys-510 contribute to the active site.

The protein belongs to the GPI family.

Its subcellular location is the cytoplasm. The catalysed reaction is alpha-D-glucose 6-phosphate = beta-D-fructose 6-phosphate. Its pathway is carbohydrate biosynthesis; gluconeogenesis. The protein operates within carbohydrate degradation; glycolysis; D-glyceraldehyde 3-phosphate and glycerone phosphate from D-glucose: step 2/4. In terms of biological role, catalyzes the reversible isomerization of glucose-6-phosphate to fructose-6-phosphate. This Mesorhizobium japonicum (strain LMG 29417 / CECT 9101 / MAFF 303099) (Mesorhizobium loti (strain MAFF 303099)) protein is Glucose-6-phosphate isomerase.